Consider the following 267-residue polypeptide: NAD kinase (267 aa).

Aspartate 45 acts as the Proton acceptor in catalysis. NAD(+) is bound by residues 45–46 (DG), 121–122 (NE), lysine 147, aspartate 149, 160–165 (TAYSKS), and alanine 184.

The protein belongs to the NAD kinase family. A divalent metal cation is required as a cofactor.

It is found in the cytoplasm. It carries out the reaction NAD(+) + ATP = ADP + NADP(+) + H(+). Functionally, involved in the regulation of the intracellular balance of NAD and NADP, and is a key enzyme in the biosynthesis of NADP. Catalyzes specifically the phosphorylation on 2'-hydroxyl of the adenosine moiety of NAD to yield NADP. In Lactobacillus gasseri (strain ATCC 33323 / DSM 20243 / BCRC 14619 / CIP 102991 / JCM 1131 / KCTC 3163 / NCIMB 11718 / NCTC 13722 / AM63), this protein is NAD kinase.